The chain runs to 701 residues: A-type ATP synthase subunit I (701 aa).

A run of 10 helical transmembrane segments spans residues 340 to 360 (WEISPIVFLVFTFPILFGLMF), 363 to 379 (FGNALVLLLFSIWFYRY), 388 to 408 (IPKLSIILIYSSIVAIITGLL), 435 to 455 (LYNLWPIPASVSEAIKFLLPF), 468 to 488 (MIFSVLLGALALFVSSLLGVI), 498 to 518 (FLFLEKLPLFLLYVVPIFIFM), 555 to 575 (GIVWWTSFALLYNWAAHAILV), 583 to 603 (WGSAIAMGFIEGGFEGALLLL), 612 to 632 (VLVFALSHYYILYAFSYMAYL), and 649 to 669 (IIILIIGNLLAIGLEGLVVFI).

It belongs to the V-ATPase 116 kDa subunit family. In terms of assembly, has multiple subunits with at least A(3), B(3), C, D, E, F, H, I and proteolipid K(x).

It localises to the cell membrane. Its function is as follows. Component of the A-type ATP synthase that produces ATP from ADP in the presence of a proton gradient across the membrane. The chain is A-type ATP synthase subunit I from Saccharolobus solfataricus (strain ATCC 35092 / DSM 1617 / JCM 11322 / P2) (Sulfolobus solfataricus).